The following is a 384-amino-acid chain: Sensor protein VanS (384 aa).

Transmembrane regions (helical) follow at residues 21 to 41 and 76 to 96; these read MYIV…RSMI and IDIF…RVML. Residues 161-376 form the Histidine kinase domain; sequence YLAHDIKTPL…TFRVELPAMP (216 aa). H164 is subject to Phosphohistidine; by autocatalysis. Residues 221 to 384 are involved in low-affinity ATP-binding. Exhibits higher affinity for ATP than GTP; it reads QTITLTKTHI…MPDLVDKRRS (164 aa).

In terms of processing, autophosphorylated.

It localises to the membrane. It carries out the reaction ATP + protein L-histidine = ADP + protein N-phospho-L-histidine.. Phosphorylation of VanR inhibited by EDTA. Its function is as follows. Member of the two-component regulatory system VanS/VanR. Functions as a sensor protein kinase which is autophosphorylated at a histidine residue in response to environmental stimuli, such as glycopeptide antibiotics. VanS transfers its phosphate group to transcriptional regulatory protein VanR, thereby modulating expression of target genes. Binds directly to, and autophosphorylation activity is enhanced by, the glycopeptides vancomycin and teicoplanin, in vitro. However it has also been reported that autophosphorylation, phosphate transfer to VanR and dephosphorylation of phospho-VanR are all unaffected by the presence of vancomycin, in vitro. In the absence of vancomycin, negatively regulates VanR-mediated activation of vanS, vanH, vanA and vanX, probably as a result of dephosphorylating phospho-VanR. May inhibit promoter-specific DNA binding by VanR. Involved in conferring vancomycin resistance. This is Sensor protein VanS from Enterococcus faecium (Streptococcus faecium).